The sequence spans 115 residues: Large ribosomal subunit protein bL19 (115 aa).

The protein belongs to the bacterial ribosomal protein bL19 family.

This protein is located at the 30S-50S ribosomal subunit interface and may play a role in the structure and function of the aminoacyl-tRNA binding site. This chain is Large ribosomal subunit protein bL19, found in Brevibacillus brevis (strain 47 / JCM 6285 / NBRC 100599).